The chain runs to 322 residues: Cysteine protease yopT1 (322 aa).

Catalysis depends on residues Cys139, His258, and Asp274.

The protein belongs to the peptidase C58 family. Interacts with human ARHA.

It is found in the secreted. Functionally, cysteine protease, which is translocated into infected cells and plays a central role in pathogenesis by cleaving the C-terminus end of the human small GTPase RhoA/ARHA, a regulator of cytoskeleton. Once cleaved, ARHA loses its lipid modification, and is released from the cell membrane, leading to the subsequent disruption of actin cytoskeleton of the host cell. This chain is Cysteine protease yopT1 (yopT1), found in Yersinia enterocolitica.